The sequence spans 473 residues: Sucrose-6-phosphate hydrolase (473 aa).

Substrate contacts are provided by residues 44 to 47 (LLND), Q63, 106 to 107 (YS), 167 to 168 (RD), and E224. D47 is an active-site residue.

This sequence belongs to the glycosyl hydrolase 32 family.

It localises to the cytoplasm. It catalyses the reaction Hydrolysis of terminal non-reducing beta-D-fructofuranoside residues in beta-D-fructofuranosides.. The protein operates within glycan biosynthesis; sucrose metabolism. The chain is Sucrose-6-phosphate hydrolase (scrB) from Lactococcus lactis subsp. lactis (Streptococcus lactis).